The following is a 230-amino-acid chain: RNA chaperone ProQ (230 aa).

A compositionally biased stretch (basic and acidic residues) spans 105-125; it reads EAKARVQAQREQHQAKKREAG. Positions 105 to 182 are disordered; that stretch reads EAKARVQAQR…EQRKPVTDTT (78 aa). Residues 154 to 167 show a composition bias toward low complexity; sequence PSRPQAARPASAPR. Residues 168-178 show a composition bias toward basic and acidic residues; sequence AESRVEQRKPV.

It belongs to the ProQ family.

It localises to the cytoplasm. RNA chaperone with significant RNA binding, RNA strand exchange and RNA duplexing activities. May regulate ProP activity through an RNA-based, post-transcriptional mechanism. This is RNA chaperone ProQ from Erwinia tasmaniensis (strain DSM 17950 / CFBP 7177 / CIP 109463 / NCPPB 4357 / Et1/99).